A 423-amino-acid chain; its full sequence is Histidine--tRNA ligase 2 (423 aa).

Belongs to the class-II aminoacyl-tRNA synthetase family. Homodimer.

The protein resides in the cytoplasm. It carries out the reaction tRNA(His) + L-histidine + ATP = L-histidyl-tRNA(His) + AMP + diphosphate + H(+). The sequence is that of Histidine--tRNA ligase 2 from Bacillus cereus (strain ATCC 14579 / DSM 31 / CCUG 7414 / JCM 2152 / NBRC 15305 / NCIMB 9373 / NCTC 2599 / NRRL B-3711).